Reading from the N-terminus, the 85-residue chain is MLRRKPTRLELKLDDIEEFENIRKDLETRKKQKEDVEVVGGSDGEGAIGLSSDPKSREQMINDRIGYKPQPKPNNRSSQFGSLEF.

The stretch at 7 to 38 (TRLELKLDDIEEFENIRKDLETRKKQKEDVEV) forms a coiled coil. Positions 30-85 (KKQKEDVEVVGGSDGEGAIGLSSDPKSREQMINDRIGYKPQPKPNNRSSQFGSLEF) are disordered. Residues Ser42 and Ser82 each carry the phosphoserine modification. A compositionally biased stretch (polar residues) spans 73-85 (PNNRSSQFGSLEF).

This sequence belongs to the CDC26 family. V-shaped homodimer. Interacts with CDC16. The mammalian APC/C is composed at least of 14 distinct subunits ANAPC1, ANAPC2, CDC27/APC3, ANAPC4, ANAPC5, CDC16/APC6, ANAPC7, CDC23/APC8, ANAPC10, ANAPC11, CDC26/APC12, ANAPC13, ANAPC15 and ANAPC16 that assemble into a complex of at least 19 chains with a combined molecular mass of around 1.2 MDa; APC/C interacts with FZR1 and FBXO5. Interacts with FBXO43.

It localises to the nucleus. Its pathway is protein modification; protein ubiquitination. Component of the anaphase promoting complex/cyclosome (APC/C), a cell cycle-regulated E3 ubiquitin ligase that controls progression through mitosis and the G1 phase of the cell cycle. The APC/C complex acts by mediating ubiquitination and subsequent degradation of target proteins: it mainly mediates the formation of 'Lys-11'-linked polyubiquitin chains and, to a lower extent, the formation of 'Lys-48'- and 'Lys-63'-linked polyubiquitin chains. The APC/C complex catalyzes assembly of branched 'Lys-11'-/'Lys-48'-linked branched ubiquitin chains on target proteins. May recruit the E2 ubiquitin-conjugating enzymes to the complex. This chain is Anaphase-promoting complex subunit CDC26 (CDC26), found in Homo sapiens (Human).